We begin with the raw amino-acid sequence, 666 residues long: tRNA 5-methylaminomethyl-2-thiouridine biosynthesis bifunctional protein MnmC (666 aa).

The segment at 1–245 (MKQYAIQPAN…KREMLCGVMA (245 aa)) is tRNA (mnm(5)s(2)U34)-methyltransferase. The tract at residues 270-666 (IGGGIASALL…RKLLKGKAVK (397 aa)) is FAD-dependent cmnm(5)s(2)U34 oxidoreductase.

This sequence in the N-terminal section; belongs to the methyltransferase superfamily. tRNA (mnm(5)s(2)U34)-methyltransferase family. It in the C-terminal section; belongs to the DAO family. It depends on FAD as a cofactor.

It localises to the cytoplasm. The enzyme catalyses 5-aminomethyl-2-thiouridine(34) in tRNA + S-adenosyl-L-methionine = 5-methylaminomethyl-2-thiouridine(34) in tRNA + S-adenosyl-L-homocysteine + H(+). In terms of biological role, catalyzes the last two steps in the biosynthesis of 5-methylaminomethyl-2-thiouridine (mnm(5)s(2)U) at the wobble position (U34) in tRNA. Catalyzes the FAD-dependent demodification of cmnm(5)s(2)U34 to nm(5)s(2)U34, followed by the transfer of a methyl group from S-adenosyl-L-methionine to nm(5)s(2)U34, to form mnm(5)s(2)U34. The polypeptide is tRNA 5-methylaminomethyl-2-thiouridine biosynthesis bifunctional protein MnmC (Citrobacter koseri (strain ATCC BAA-895 / CDC 4225-83 / SGSC4696)).